We begin with the raw amino-acid sequence, 316 residues long: MRFWALTVLSLLLSLLLGVSSDTAQCGSQAGNATCPNDLCCSSGGYCGLTVAYCCAGCVSQCRNCFFTESMFEQMLPNRNNDSCPGKGFYTYDAYFVATEFYPGFGMTGDDDTRKRELAAFFAQTSQETSGRSIIGEDAPFTWGYCLVNELNPNSDYCDPKTKSSYPCVADYYGRGPLQLRWNYNYGECGNYLGQNLLDEPEKVATDPVLSFEAALWFWMNPHSTGAPSCHEVITGEWSPSEADIEAGRKPGFGMLTNIITNGGECTKDGKTRQQNRIDYYLRYCDMLQVDPGDNLYCDNQETFEDNGLLKMVGTM.

Residues 1–23 form the signal peptide; the sequence is MRFWALTVLSLLLSLLLGVSSDT. The region spanning 24-64 is the Chitin-binding type-1 domain; that stretch reads AQCGSQAGNATCPNDLCCSSGGYCGLTVAYCCAGCVSQCRN. Intrachain disulfides connect Cys26/Cys41, Cys35/Cys47, Cys40/Cys54, Cys58/Cys62, Cys84/Cys146, Cys158/Cys168, and Cys266/Cys298. The active-site Proton donor is the Glu128.

Belongs to the glycosyl hydrolase 19 family. Chitinase class I subfamily.

It catalyses the reaction Random endo-hydrolysis of N-acetyl-beta-D-glucosaminide (1-&gt;4)-beta-linkages in chitin and chitodextrins.. In terms of biological role, defense against chitin-containing fungal pathogens. This is Endochitinase WIN8 (WIN8) from Populus trichocarpa (Western balsam poplar).